Consider the following 427-residue polypeptide: MASILHYFLALSLSCSFLFFLSDSVTPTKPINLVVLPVQNDGSTGLHWANLQKRTPLMQVPVLVDLNGNHLWVNCEQQYSSKTYQAPFCHSTQCSRANTHQCLSCPAASRPGCHKNTCGLMSTNPITQQTGLGELGEDVLAIHATQGSTQQLGPLVTVPQFLFSCAPSFLVQKGLPRNTQGVAGLGHAPISLPNQLASHFGLQRQFTTCLSRYPTSKGAIIFGDAPNNMRQFQNQDIFHDLAFTPLTITLQGEYNVRVNSIRINQHSVFPLNKISSTIVGSTSGGTMISTSTPHMVLQQSVYQAFTQVFAQQLPKQAQVKSVAPFGLCFNSNKINAYPSVDLVMDKPNGPVWRISGEDLMVQAQPGVTCLGVMNGGMQPRAEITLGARQLEENLVVFDLARSRVGFSTSSLHSHGVKCADLFNFANA.

Positions 1–24 (MASILHYFLALSLSCSFLFFLSDS) are cleaved as a signal peptide. The 361-residue stretch at 47–407 (HWANLQKRTP…DLARSRVGFS (361 aa)) folds into the Peptidase A1 domain.

It belongs to the peptidase A1 family. The mature protein consists of high- and low-kDa subunits linked by disulfide bonds.

Seed storage protein. Has a protein kinase activity. Binds leginsulin. The polypeptide is Basic 7S globulin (BG) (Glycine max (Soybean)).